The chain runs to 162 residues: EF-hand calcium-binding domain-containing protein 11 (162 aa).

EF-hand domains are found at residues 18–53 (SERR…LFGY), 91–126 (LYRN…VAPK), and 127–162 (LPSR…GKAK). The Ca(2+) site is built by D140, D142, D144, H146, and D151.

The polypeptide is EF-hand calcium-binding domain-containing protein 11 (Efcab11) (Rattus norvegicus (Rat)).